Consider the following 445-residue polypeptide: Argininosuccinate synthase (445 aa).

Residues 17–25 (AFSGGLDTS) and A43 each bind ATP. Y99 serves as a coordination point for L-citrulline. Residues G129 and T131 each coordinate ATP. Residues T131, N135, and D136 each contribute to the L-aspartate site. Position 135 (N135) interacts with L-citrulline. Residue D136 coordinates ATP. Residues R139 and S192 each contribute to the L-citrulline site. D194 provides a ligand contact to ATP. L-citrulline contacts are provided by T201, E203, and E280.

This sequence belongs to the argininosuccinate synthase family. Type 2 subfamily. As to quaternary structure, homotetramer.

The protein localises to the cytoplasm. It carries out the reaction L-citrulline + L-aspartate + ATP = 2-(N(omega)-L-arginino)succinate + AMP + diphosphate + H(+). Its pathway is amino-acid biosynthesis; L-arginine biosynthesis; L-arginine from L-ornithine and carbamoyl phosphate: step 2/3. The polypeptide is Argininosuccinate synthase (argG) (Bradyrhizobium diazoefficiens (strain JCM 10833 / BCRC 13528 / IAM 13628 / NBRC 14792 / USDA 110)).